The following is a 137-amino-acid chain: Large ribosomal subunit protein uL13 (137 aa).

At R55 the chain carries Citrulline. S73 is subject to Phosphoserine. R136 carries the citrulline modification.

Belongs to the universal ribosomal protein uL13 family. In terms of assembly, component of the 60S ribosome. Component of the GAIT complex. Interacts with EIF4G1. Phosphorylation at Ser-73 upon interferon-gamma treatment in macrophages involves a DAPK1-DAPK3 kinase cascade and is causing release from the ribosome, association with the GAIT complex and subsequent involvement in transcript-selective translation inhibition. In terms of processing, citrullinated by PADI4.

The protein resides in the cytoplasm. In terms of biological role, associated with ribosomes but is not required for canonical ribosome function and has extra-ribosomal functions. Component of the GAIT (gamma interferon-activated inhibitor of translation) complex which mediates interferon-gamma-induced transcript-selective translation inhibition in inflammation processes. Upon interferon-gamma activation and subsequent phosphorylation dissociates from the ribosome and assembles into the GAIT complex which binds to stem loop-containing GAIT elements in the 3'-UTR of diverse inflammatory mRNAs (such as ceruplasmin) and suppresses their translation. In the GAIT complex interacts with m7G cap-bound eIF4G at or near the eIF3-binding site and blocks the recruitment of the 43S ribosomal complex. Involved in methylation of rRNA. The polypeptide is Large ribosomal subunit protein uL13 (RPL13A) (Sus scrofa (Pig)).